Here is a 435-residue protein sequence, read N- to C-terminus: MTLDLAAFARDKSIKYFMISYTDLFGGQRAKLVPAEAIADMQKDGAGFAGFATWLDLTPAHPDLFAVPDASSVIQLPWKKDVAWVAADCVMDDRPVEQAPRVVLKRLVAEAAKEGLRVKTGVEPEFFLISADGSVISDQFDTAEKPCYDQQAVMRRYDVIAEICDYMLELGWKPYQNDHEDANGQFEMNWEYDDVLKTADKHSFFKFMVKSVAEKHGLRATFMPKPFKGLTGNGCHAHISVWDVDGRVNAFADKEMAFGLSAQGKTFLGGIMKHAPALAAITNPTVNSYKRINAPRTTSGATWSPNTVTWTGNNRTHMVRVPGPGRFELRLPDGAVNPYLLQAIIIAAGLEGIRSQADPGQHYDIDMYAEGHLVKDAPRLPLNLLDALRAFDADEGLKAAIGAEFSSAYLKLKHLEWNAYCSHFTQWERDSTLDI.

A GS beta-grasp domain is found at 12–94 (KSIKYFMISY…VAADCVMDDR (83 aa)). The GS catalytic domain occupies 100-435 (PRVVLKRLVA…QWERDSTLDI (336 aa)). Mg(2+)-binding residues include E123, E125, E180, and E187. L-glutamate is bound at residue G232. H236 is a binding site for Mg(2+). S240 is an ATP binding site. Residues R291 and R315 each contribute to the L-glutamate site. The ATP site is built by R315 and R320. Position 328 (E328) interacts with Mg(2+). Residue R330 participates in L-glutamate binding.

Belongs to the glutamine synthetase family. Homooctamer. Mg(2+) is required as a cofactor.

The catalysed reaction is L-glutamate + NH4(+) + ATP = L-glutamine + ADP + phosphate + H(+). In terms of biological role, catalyzes the ATP-dependent biosynthesis of glutamine from glutamate and ammonia. This Rhizobium leguminosarum bv. phaseoli protein is Glutamine synthetase.